The following is a 171-amino-acid chain: Shikimate kinase (171 aa).

14 to 19 (GAGKST) lines the ATP pocket. Position 18 (S18) interacts with Mg(2+). D36, R60, and G82 together coordinate substrate. R120 contributes to the ATP binding site. R139 provides a ligand contact to substrate. Q156 contributes to the ATP binding site.

This sequence belongs to the shikimate kinase family. As to quaternary structure, monomer. Mg(2+) is required as a cofactor.

It is found in the cytoplasm. The enzyme catalyses shikimate + ATP = 3-phosphoshikimate + ADP + H(+). Its pathway is metabolic intermediate biosynthesis; chorismate biosynthesis; chorismate from D-erythrose 4-phosphate and phosphoenolpyruvate: step 5/7. Functionally, catalyzes the specific phosphorylation of the 3-hydroxyl group of shikimic acid using ATP as a cosubstrate. The polypeptide is Shikimate kinase (Shewanella pealeana (strain ATCC 700345 / ANG-SQ1)).